The chain runs to 316 residues: tRNA-splicing endonuclease subunit Sen34 (316 aa).

Residues 120–184 (QAAKKQKLEQ…PGPSNGVTPL (65 aa)) are disordered. 2 stretches are compositionally biased toward polar residues: residues 144–159 (EATQ…QPSA) and 168–181 (LDSS…SNGV). Catalysis depends on residues Tyr253, His261, and Lys292.

The protein belongs to the tRNA-intron endonuclease family. In terms of assembly, tRNA splicing endonuclease is a heterotetramer composed of TSEN2, TSEN15, TSEN34/LENG5 and TSEN54. tRNA splicing endonuclease complex also contains proteins of the pre-mRNA 3'-end processing machinery such as CLP1, CPSF1, CPSF4 and CSTF2.

The protein resides in the nucleus. The protein localises to the nucleolus. The enzyme catalyses pretRNA = a 3'-half-tRNA molecule with a 5'-OH end + a 5'-half-tRNA molecule with a 2',3'-cyclic phosphate end + an intron with a 2',3'-cyclic phosphate and a 5'-hydroxyl terminus.. Its function is as follows. Constitutes one of the two catalytic subunit of the tRNA-splicing endonuclease complex, a complex responsible for identification and cleavage of the splice sites in pre-tRNA. It cleaves pre-tRNA at the 5'- and 3'-splice sites to release the intron. The products are an intron and two tRNA half-molecules bearing 2',3'-cyclic phosphate and 5'-OH termini. There are no conserved sequences at the splice sites, but the intron is invariably located at the same site in the gene, placing the splice sites an invariant distance from the constant structural features of the tRNA body. The tRNA splicing endonuclease is also involved in mRNA processing via its association with pre-mRNA 3'-end processing factors, establishing a link between pre-tRNA splicing and pre-mRNA 3'-end formation, suggesting that the endonuclease subunits function in multiple RNA-processing events. In Mus musculus (Mouse), this protein is tRNA-splicing endonuclease subunit Sen34 (Tsen34).